A 552-amino-acid chain; its full sequence is Phosphoglucomutase (552 aa).

Serine 143 functions as the Phosphoserine intermediate in the catalytic mechanism. Residues serine 143, aspartate 295, aspartate 297, and aspartate 299 each contribute to the Mg(2+) site.

This sequence belongs to the phosphohexose mutase family. The cofactor is Mg(2+).

It catalyses the reaction alpha-D-glucose 1-phosphate = alpha-D-glucose 6-phosphate. The protein operates within glycolipid metabolism; diglucosyl-diacylglycerol biosynthesis. Functionally, catalyzes the interconversion between glucose-6-phosphate and alpha-glucose-1-phosphate. This is the first step in the biosynthesis of diglucosyl-diacylglycerol (Glc2-DAG), i.e. the predominant glycolipid found in the S.aureus membrane, which is also used as a membrane anchor for lipoteichoic acid (LTA). This is Phosphoglucomutase (pgcA) from Staphylococcus aureus (strain bovine RF122 / ET3-1).